We begin with the raw amino-acid sequence, 468 residues long: Protein translocase subunit SecY (468 aa).

Residues 1–20 lie on the Cytoplasmic side of the membrane; the sequence is MGARDVIYAMEKWFPEVERP. The helical transmembrane segment at 21–47 threads the bilayer; the sequence is KKHVPLKEKFVWTGLALVLYYVLAEIP. Over 48–58 the chain is Extracellular; that stretch reads VYGIPKKIQDY. The segment at residues 59–66 is an intramembrane region (helical); the sequence is FQFLRVVL. Residues 59–87 form a discontinuously helical membrane-spanning segment; sequence FQFLRVVLAGRNGSILTLGIGPIVTAGII. Residues 67 to 78 lie within the membrane without spanning it; sequence AGRNGSILTLGI. The helical intramembrane region spans 79-87; that stretch reads GPIVTAGII. Residues 88–108 are Cytoplasmic-facing; the sequence is LQLLVGSELIRLDLANPEDRR. The chain crosses the membrane as a helical span at residues 109–133; the sequence is FYQALQRVFSVFMCFFEAAIWVLGG. The Extracellular portion of the chain corresponds to 134–144; the sequence is AFGRVGVDVTY. A helical membrane pass occupies residues 145 to 169; it reads TIATLMIIQLALGGIILIVLDELVS. Residues 170–175 are Cytoplasmic-facing; sequence KWGIGS. The helical transmembrane segment at 176-194 threads the bilayer; sequence GISLFIAAGVSQRILTRSL. Over 195 to 239 the chain is Extracellular; that stretch reads NPLTDPNIIDPLTGKPAIVGAIPYFIQHILDGDLKGALYRGGSAP. The chain crosses the membrane as a helical span at residues 240–261; the sequence is DMIAVTATIIVFLVVVYFESMR. Residues 262-285 lie on the Cytoplasmic side of the membrane; that stretch reads VEIPLGYRGVTIRGRYPIKFLYVS. Residues 286-307 form a helical membrane-spanning segment; the sequence is NIPIILTFALYANIQLWARVLD. Over 308-346 the chain is Extracellular; that stretch reads RFGHPWLGRFDPVTGNPIGGFVLYVIPPRNIFTVIDNPV. A helical transmembrane segment spans residues 347–366; it reads RAIIYLILTIIFSLLFGFLW. Over 367–409 the chain is Cytoplasmic; it reads VELTGLDARTIARQLQRAGLQIPGFRRDPRTLERVLQKYIPYV. Residues 410-428 form a helical membrane-spanning segment; that stretch reads TFWGSLTVALISVLADFLG. Residues 429–431 are Extracellular-facing; it reads ALG. A helical membrane pass occupies residues 432–446; sequence TGTGILLTVGILYRF. The Cytoplasmic segment spans residues 447–468; that stretch reads YEEIAREQITEMFPALRRLFKG.

The protein belongs to the SecY/SEC61-alpha family. As to quaternary structure, component of the Sec protein translocase complex. Heterotrimer consisting of alpha (SecY), beta (SecG) and gamma (SecE) subunits. The heterotrimers can form oligomers, although 1 heterotrimer is thought to be able to translocate proteins. Interacts with the ribosome. May interact with SecDF, and other proteins may be involved.

The protein resides in the cell membrane. The central subunit of the protein translocation channel SecYEG. Consists of two halves formed by TMs 1-5 and 6-10. These two domains form a lateral gate at the front which open onto the bilayer between TMs 2 and 7, and are clamped together by SecE at the back. The channel is closed by both a pore ring composed of hydrophobic SecY resides and a short helix (helix 2A) on the extracellular side of the membrane which forms a plug. The plug probably moves laterally to allow the channel to open. The ring and the pore may move independently. In Pyrococcus horikoshii (strain ATCC 700860 / DSM 12428 / JCM 9974 / NBRC 100139 / OT-3), this protein is Protein translocase subunit SecY.